Consider the following 465-residue polypeptide: MSQGKIVQIIGAVVDVEFPRDMIPRVYDALKLDENGLTLEVQQLLGDGVVRTIAMGSSDGLKRGMTVSNTGAPITVPVGKGTLGRIVDVLGTPVDEAGPIDTDKSRAIHQAAPKFDELSSTTELLETGIKVIDLLCPFAKGGKVGLFGGAGVGKTVNMMELINNIAKAHSGLSVFAGVGERTREGNDFYHEMKDSNVLDKVAMVYGQMNEPPGNRLRVALTGLTMAEYFRDEKDENGKGRDVLFFVDNIYRYTLAGTEVSALLGRMPSAVGYQPTLAEEMGCLQERITSTQTGSITSIQAVYVPADDLTDPSPATTFAHLDATVVLSRDIASLGIYPAVDPLDSTSRQLDPMVLGQEHYDVARGVQSTLQKYKELRDIIAILGMDELSDEDKLTVMRARKIQRFLSQPFHVAEVFTGSPGKYVALRDTIAGFKAILNGEYDYLPEQAFYMVGSIEEAVEKAKTLN.

Residue 148–155 participates in ATP binding; it reads GGAGVGKT.

This sequence belongs to the ATPase alpha/beta chains family. F-type ATPases have 2 components, CF(1) - the catalytic core - and CF(0) - the membrane proton channel. CF(1) has five subunits: alpha(3), beta(3), gamma(1), delta(1), epsilon(1). CF(0) has three main subunits: a(1), b(2) and c(9-12). The alpha and beta chains form an alternating ring which encloses part of the gamma chain. CF(1) is attached to CF(0) by a central stalk formed by the gamma and epsilon chains, while a peripheral stalk is formed by the delta and b chains.

It is found in the cell inner membrane. It catalyses the reaction ATP + H2O + 4 H(+)(in) = ADP + phosphate + 5 H(+)(out). Produces ATP from ADP in the presence of a proton gradient across the membrane. The catalytic sites are hosted primarily by the beta subunits. In Neisseria meningitidis serogroup A / serotype 4A (strain DSM 15465 / Z2491), this protein is ATP synthase subunit beta.